A 349-amino-acid chain; its full sequence is Ferredoxin--NADP reductase (349 aa).

Residues aspartate 35, glutamine 43, tyrosine 48, valine 88, phenylalanine 123, aspartate 288, and threonine 329 each contribute to the FAD site.

This sequence belongs to the ferredoxin--NADP reductase type 2 family. In terms of assembly, homodimer. Requires FAD as cofactor.

The enzyme catalyses 2 reduced [2Fe-2S]-[ferredoxin] + NADP(+) + H(+) = 2 oxidized [2Fe-2S]-[ferredoxin] + NADPH. The chain is Ferredoxin--NADP reductase from Colwellia psychrerythraea (strain 34H / ATCC BAA-681) (Vibrio psychroerythus).